Consider the following 160-residue polypeptide: SIVTKAIVNADAEARYLSPGELDRIKSFVAGGASRLRIAQVLTENRERIVKQAGDQLFQKRPDVVSPGGNAYGQEMTATCLRDLDYYLRLVTYGIVSGDVTPIEEIGIVGVREMYKSLGTPIDAVAGGVAAMKNVAATLLSAEDSSEAGSYFDYVVGAMQ.

Asn-70 is modified (N4-methylasparagine). Cys-80 contacts (2R,3E)-phycocyanobilin.

It belongs to the phycobiliprotein family. Component of the phycobilisome. Heterodimer of an alpha and a beta chain. Contains one covalently linked phycocyanobilin chromophore.

It localises to the cellular thylakoid membrane. In terms of biological role, light-harvesting photosynthetic bile pigment-protein from the phycobiliprotein complex. Allophycocyanin has a maximum absorption at approximately 650 nanometers. The sequence is that of Allophycocyanin alpha chain (apcA) from Anabaena cylindrica.